A 432-amino-acid polypeptide reads, in one-letter code: T-box transcription factor T (432 aa).

The segment at residues 49–217 is a DNA-binding region (T-box); sequence LWTRFKELTN…HNPFAKAFLD (169 aa). The interval 274-306 is disordered; the sequence is CERYSSLRNHRSAPYPSPYTHRNNSPNNLADNS. Positions 293 to 306 are enriched in polar residues; sequence THRNNSPNNLADNS.

In terms of assembly, when not bound to DNA, exists as a monomer. Binds DNA as a dimer. As to expression, expressed in presumptive mesodermal cells around the blastopore, and then in the notochord.

It localises to the nucleus. Functionally, involved in the transcriptional regulation of genes required for mesoderm formation and differentiation. Binds to the palindromic T site 5'-TTCACACCTAGGTGTGAA-3' DNA sequence. Causes dorsal mesodermal differentiation of animal cap ectoderm when co-expressed with wnt8 and noggin. None of these molecules causes dorsal mesoderm formation when expressed alone. Establishes the left/right axis at early gastrula stage by directly up-regulating mesodermal expression of zic3. The sequence is that of T-box transcription factor T from Xenopus laevis (African clawed frog).